A 138-amino-acid polypeptide reads, in one-letter code: Small ribosomal subunit protein uS11c (138 aa).

A disordered region spans residues 1–24; sequence MTKPIPRIGSRRNGRIGSRKSGRR. The span at 9 to 24 shows a compositional bias: basic residues; the sequence is GSRRNGRIGSRKSGRR.

The protein belongs to the universal ribosomal protein uS11 family. As to quaternary structure, part of the 30S ribosomal subunit.

It localises to the plastid. The protein resides in the chloroplast. The polypeptide is Small ribosomal subunit protein uS11c (Liriodendron tulipifera (Tuliptree)).